We begin with the raw amino-acid sequence, 210 residues long: RNA chaperone ProQ (210 aa).

2 stretches are compositionally biased toward basic and acidic residues: residues 103 to 124 (LKESKERVFASRRTNNKEEKAK) and 132 to 144 (RKADAAAKSDKPK). Residues 103–148 (LKESKERVFASRRTNNKEEKAKQPRRPAPRKADAAAKSDKPKAAPK) are disordered.

The protein belongs to the ProQ family.

It is found in the cytoplasm. In terms of biological role, RNA chaperone with significant RNA binding, RNA strand exchange and RNA duplexing activities. This chain is RNA chaperone ProQ, found in Aeromonas salmonicida (strain A449).